The following is a 245-amino-acid chain: Mitochondrial import inner membrane translocase subunit Tim21 (245 aa).

Residues 1–18 (MICAFLRVVRHAEKLHGS) constitute a mitochondrion transit peptide. The segment at 64-97 (FWTQGPDPRKAKEDSSKQVSINRNQREETGVSTS) is disordered. Over residues 70–79 (DPRKAKEDSS) the composition is skewed to basic and acidic residues. Residues 108-128 (TYLIVVLFGVSITGSLLYTIF) traverse the membrane as a helical segment.

Belongs to the TIM21 family. In terms of assembly, component of the TIM23 complex. Component of the MITRAC (mitochondrial translation regulation assembly intermediate of cytochrome c oxidase complex) complex, the core components of this complex being COA3/MITRAC12 and COX14. Interacts with COA3 and MT-CO1/COX1.

Its subcellular location is the mitochondrion membrane. Participates in the translocation of transit peptide-containing proteins across the mitochondrial inner membrane. Also required for assembly of mitochondrial respiratory chain complex I and complex IV as component of the MITRAC (mitochondrial translation regulation assembly intermediate of cytochrome c oxidase complex) complex. Probably shuttles between the presequence translocase and respiratory-chain assembly intermediates in a process that promotes incorporation of early nuclear-encoded subunits into these complexes. This chain is Mitochondrial import inner membrane translocase subunit Tim21 (Timm21), found in Rattus norvegicus (Rat).